The following is a 138-amino-acid chain: Putative pre-16S rRNA nuclease (138 aa).

The protein belongs to the YqgF nuclease family.

The protein resides in the cytoplasm. Functionally, could be a nuclease involved in processing of the 5'-end of pre-16S rRNA. This is Putative pre-16S rRNA nuclease from Flavobacterium johnsoniae (strain ATCC 17061 / DSM 2064 / JCM 8514 / BCRC 14874 / CCUG 350202 / NBRC 14942 / NCIMB 11054 / UW101) (Cytophaga johnsonae).